Here is a 425-residue protein sequence, read N- to C-terminus: Serine--tRNA ligase (425 aa).

Position 228-230 (228-230 (TAE)) interacts with L-serine. 259–261 (RSE) provides a ligand contact to ATP. Position 282 (E282) interacts with L-serine. Position 346 to 349 (346 to 349 (EIAS)) interacts with ATP. Residue S382 coordinates L-serine.

Belongs to the class-II aminoacyl-tRNA synthetase family. Type-1 seryl-tRNA synthetase subfamily. In terms of assembly, homodimer. The tRNA molecule binds across the dimer.

The protein localises to the cytoplasm. It catalyses the reaction tRNA(Ser) + L-serine + ATP = L-seryl-tRNA(Ser) + AMP + diphosphate + H(+). It carries out the reaction tRNA(Sec) + L-serine + ATP = L-seryl-tRNA(Sec) + AMP + diphosphate + H(+). It functions in the pathway aminoacyl-tRNA biosynthesis; selenocysteinyl-tRNA(Sec) biosynthesis; L-seryl-tRNA(Sec) from L-serine and tRNA(Sec): step 1/1. In terms of biological role, catalyzes the attachment of serine to tRNA(Ser). Is also able to aminoacylate tRNA(Sec) with serine, to form the misacylated tRNA L-seryl-tRNA(Sec), which will be further converted into selenocysteinyl-tRNA(Sec). This Rickettsia akari (strain Hartford) protein is Serine--tRNA ligase.